A 256-amino-acid chain; its full sequence is Ribosomal RNA large subunit methyltransferase E (256 aa).

S-adenosyl-L-methionine-binding residues include glycine 50, tryptophan 52, aspartate 69, aspartate 85, and aspartate 108. The Proton acceptor role is filled by lysine 148. One can recognise a TRAM domain in the interval 195 to 253 (SLRKGDVVDVTIDAMGKTGDGIAHVDDFVVFVKGGSVGDKLKIKITDVKPSFAFADIVE).

Belongs to the class I-like SAM-binding methyltransferase superfamily. RNA methyltransferase RlmE family.

The protein resides in the cytoplasm. It catalyses the reaction uridine(2552) in 23S rRNA + S-adenosyl-L-methionine = 2'-O-methyluridine(2552) in 23S rRNA + S-adenosyl-L-homocysteine + H(+). In terms of biological role, specifically methylates the uridine in position 2552 of 23S rRNA at the 2'-O position of the ribose in the fully assembled 50S ribosomal subunit. This is Ribosomal RNA large subunit methyltransferase E from Methanocella arvoryzae (strain DSM 22066 / NBRC 105507 / MRE50).